The sequence spans 99 residues: Aspartyl/glutamyl-tRNA(Asn/Gln) amidotransferase subunit C (99 aa).

The protein belongs to the GatC family. Heterotrimer of A, B and C subunits.

The catalysed reaction is L-glutamyl-tRNA(Gln) + L-glutamine + ATP + H2O = L-glutaminyl-tRNA(Gln) + L-glutamate + ADP + phosphate + H(+). The enzyme catalyses L-aspartyl-tRNA(Asn) + L-glutamine + ATP + H2O = L-asparaginyl-tRNA(Asn) + L-glutamate + ADP + phosphate + 2 H(+). Functionally, allows the formation of correctly charged Asn-tRNA(Asn) or Gln-tRNA(Gln) through the transamidation of misacylated Asp-tRNA(Asn) or Glu-tRNA(Gln) in organisms which lack either or both of asparaginyl-tRNA or glutaminyl-tRNA synthetases. The reaction takes place in the presence of glutamine and ATP through an activated phospho-Asp-tRNA(Asn) or phospho-Glu-tRNA(Gln). The protein is Aspartyl/glutamyl-tRNA(Asn/Gln) amidotransferase subunit C of Delftia acidovorans (strain DSM 14801 / SPH-1).